We begin with the raw amino-acid sequence, 353 residues long: Iron(III) enterobactin esterase (353 aa).

Belongs to the Fes family.

It is found in the cytoplasm. The enzyme catalyses Fe(III)-enterobactin + 3 H2O + H(+) = Fe(III)-[N-(2,3-dihydroxybenzoyl)-L-serine] + 2 N-(2,3-dihydroxybenzoyl)-L-serine. It carries out the reaction Fe(III)-enterobactin + H2O = Fe(III)-[N-(2,3-dihydroxybenzoyl)-L-serine]3 + H(+). The catalysed reaction is Fe(III)-[N-(2,3-dihydroxybenzoyl)-L-serine]3 + H2O + H(+) = Fe(III)-[N-(2,3-dihydroxybenzoyl)-L-serine]2 + N-(2,3-dihydroxybenzoyl)-L-serine. It catalyses the reaction Fe(III)-[N-(2,3-dihydroxybenzoyl)-L-serine]2 + H2O + H(+) = Fe(III)-[N-(2,3-dihydroxybenzoyl)-L-serine] + N-(2,3-dihydroxybenzoyl)-L-serine. Catalyzes the hydrolysis of ferric enterobactin (Fe-Ent). Is responsible for the release of iron from ferric enterobactin. This Yersinia enterocolitica protein is Iron(III) enterobactin esterase.